The chain runs to 393 residues: GDSL esterase/lipase At1g28600 (393 aa).

The signal sequence occupies residues 1–22 (MASLDSLVIFLFSTLFVTIVSS). Ser38 (nucleophile) is an active-site residue. N-linked (GlcNAc...) asparagine glycans are attached at residues Asn133 and Asn317. Catalysis depends on residues Asp340 and His343. Asn382 is a glycosylation site (N-linked (GlcNAc...) asparagine).

Belongs to the 'GDSL' lipolytic enzyme family.

It localises to the secreted. The polypeptide is GDSL esterase/lipase At1g28600 (Arabidopsis thaliana (Mouse-ear cress)).